An 82-amino-acid polypeptide reads, in one-letter code: Antitoxin MazE8 (82 aa).

Forms a complex with cognate toxin MazF8.

In terms of biological role, antitoxin component of a type II toxin-antitoxin (TA) system. Its cognate toxin is MazF8. In Mycobacterium tuberculosis (strain ATCC 25618 / H37Rv), this protein is Antitoxin MazE8 (mazE8).